The primary structure comprises 601 residues: Glutathione-regulated potassium-efflux system protein KefB (601 aa).

13 helical membrane-spanning segments follow: residues 4–24 (SDFL…VPLA), 29–49 (IGAV…GLGF), 55–75 (EILH…GLEL), 87–107 (IFGV…GLLM), 115–135 (AAVV…LQLM), 152–172 (VLLF…LLAG), 177–197 (HFDW…LIGG), 207–227 (FIAA…LVLG), 230–250 (LFMD…GVLL), 268–288 (GLLL…GVLY), 291–311 (LLWV…VLYL), 324–344 (MQFA…FSTA), and 356–376 (ALLL…MKLV). One can recognise an RCK N-terminal domain in the interval 400–519 (KPQVIVVGFG…AGVTQFSRET (120 aa)).

It belongs to the monovalent cation:proton antiporter 2 (CPA2) transporter (TC 2.A.37) family. KefB subfamily. Interacts with the regulatory subunit KefG.

The protein resides in the cell inner membrane. Functionally, pore-forming subunit of a potassium efflux system that confers protection against electrophiles. Catalyzes K(+)/H(+) antiport. This chain is Glutathione-regulated potassium-efflux system protein KefB, found in Escherichia coli O17:K52:H18 (strain UMN026 / ExPEC).